The primary structure comprises 799 residues: Sodium- and chloride-dependent glycine transporter 2 (799 aa).

The interval 1–64 (MDCSAPKEMN…RSASTGAQTF (64 aa)) is disordered. The Cytoplasmic segment spans residues 1 to 201 (MDCSAPKEMN…ARGNWSSKLD (201 aa)). Low complexity predominate over residues 40-57 (PAAAPAAAVQPPRVPRSA). Serine 58 is subject to Phosphoserine. Threonine 59 is subject to Phosphothreonine. Position 86 is a phosphoserine (serine 86). 3 consecutive transmembrane segments (helical) span residues 202-222 (FILS…FPYL), 230-249 (AFLI…IFFL), and 273-293 (GCGI…NVII). Na(+)-binding residues include glycine 208, alanine 210, valine 211, and asparagine 215. Topologically, residues 294 to 395 (CYTLFYLFAS…AGIEYPGEIR (102 aa)) are extracellular. Cysteine 313 and cysteine 322 are disulfide-bonded. N-linked (GlcNAc...) asparagine glycosylation is found at asparagine 345, asparagine 355, asparagine 360, and asparagine 366. A run of 5 helical transmembrane segments spans residues 396–414 (WPLA…ASLA), 423–440 (VVYF…ILLI), 476–493 (IFFS…LSSY), 505–526 (LIVT…FSVI), and 559–578 (LPLS…TLGL). Na(+)-binding residues include serine 479, asparagine 511, leucine 576, and aspartate 579. Transmembrane regions (helical) follow at residues 606 to 624 (VFTL…PMIT), 640 to 660 (SYAL…VYGL), 681 to 700 (VCWA…FSFY), and 719 to 737 (LGWL…MFVI). Topologically, residues 738-799 (KMYLAPGRFI…VKDLELGTQC (62 aa)) are cytoplasmic.

This sequence belongs to the sodium:neurotransmitter symporter (SNF) (TC 2.A.22) family. SLC6A5 subfamily. N-glycosylated. Specifically expressed in spinal cord, brain stem, and to a lesser extent in the cerebellum.

The protein resides in the cell membrane. It carries out the reaction glycine(out) + chloride(out) + 3 Na(+)(out) = glycine(in) + chloride(in) + 3 Na(+)(in). Sodium- and chloride-dependent glycine transporter. Terminates the action of glycine by its high affinity sodium-dependent reuptake into presynaptic terminals. May be responsible for the termination of neurotransmission at strychnine-sensitive glycinergic synapses. This is Sodium- and chloride-dependent glycine transporter 2 (Slc6a5) from Rattus norvegicus (Rat).